The chain runs to 227 residues: MKLTLKVSGKFFDEENSENLSLLRDVIIDLVNNGHRVAVVTGGGGTARRYISMGRKLNLNESHLDILGILVSRLNAQLLLFSLDNIAYPKVPESIEDFNERWASGKVVITGGFQPGQSTAGVAALVSEIINADYLVLATNVNGVYTKDPQKFVDAKLLPKLTVSELKTILEGSQSVNAGKYELLDPLAIKIVERSKIKVLVINFKDLNKLPNILKGNEILGSVVVPE.

An ATP-binding site is contributed by 6–10; it reads KVSGK. Glycine 43 serves as a coordination point for UMP. Glycine 44 and arginine 48 together coordinate ATP. Residues aspartate 65 and 113–119 each bind UMP; that span reads FQPGQST. ATP-binding residues include threonine 139, asparagine 140, tyrosine 145, and aspartate 148.

This sequence belongs to the UMP kinase family. Homohexamer.

Its subcellular location is the cytoplasm. The catalysed reaction is UMP + ATP = UDP + ADP. Its pathway is pyrimidine metabolism; CTP biosynthesis via de novo pathway; UDP from UMP (UMPK route): step 1/1. With respect to regulation, inhibited by UTP. Functionally, catalyzes the reversible phosphorylation of UMP to UDP. The protein is Uridylate kinase of Sulfolobus acidocaldarius (strain ATCC 33909 / DSM 639 / JCM 8929 / NBRC 15157 / NCIMB 11770).